The primary structure comprises 213 residues: Phosphoribosyl-dephospho-CoA transferase (213 aa).

Active-site residues include D135 and D137.

This sequence belongs to the MdcG family.

The enzyme catalyses apo-[malonate decarboxylase ACP] + 2'-(5''-triphospho-alpha-D-ribosyl)-3'-dephospho-CoA = holo-[malonate decarboxylase ACP] + diphosphate. In terms of biological role, transfers 2'-(5-triphosphoribosyl)-3'-dephosphocoenzyme-A to the apo-[acyl-carrier-protein] of the malonate decarboxylase to yield holo-[acyl-carrier-protein]. The protein is Phosphoribosyl-dephospho-CoA transferase of Xanthomonas euvesicatoria pv. vesicatoria (strain 85-10) (Xanthomonas campestris pv. vesicatoria).